The primary structure comprises 523 residues: Vanin-like protein 3 (523 aa).

A signal peptide spans 1 to 19 (MAVFLRRFLWLISFTLVLT). Positions 29-298 (YIAGVVEYRP…RKLLLAKVPL (270 aa)) constitute a CN hydrolase domain. N-linked (GlcNAc...) asparagine glycosylation occurs at Asn64. Glu74 serves as the catalytic Proton acceptor. Lys167 serves as the catalytic Proton donor. 2 N-linked (GlcNAc...) asparagine glycosylation sites follow: Asn177 and Asn192. Residue Cys200 is the Nucleophile of the active site. N-linked (GlcNAc...) asparagine glycosylation is found at Asn330 and Asn468. Asn498 carries GPI-anchor amidated asparagine lipidation. Residues 499–523 (GGAGRLGTLLFLLITPLIMMHLFRE) constitute a propeptide, removed in mature form.

It belongs to the carbon-nitrogen hydrolase superfamily. BTD/VNN family. In terms of tissue distribution, expressed in third instar larvae.

It is found in the cell membrane. This is Vanin-like protein 3 from Drosophila melanogaster (Fruit fly).